A 169-amino-acid chain; its full sequence is uncharacterized protein (169 aa).

Positions 32-162 constitute a Nudix hydrolase domain; that stretch reads CNFRVVNSFV…EPAKSDLIKL (131 aa). Positions 69–91 match the Nudix box motif; it reads GGHVESGETYEDALQRELEEELN. Mg(2+)-binding residues include Glu-85 and Glu-89.

This sequence belongs to the Nudix hydrolase family. Mg(2+) is required as a cofactor.

This is an uncharacterized protein from Nostoc sp. (strain PCC 7120 / SAG 25.82 / UTEX 2576).